The primary structure comprises 241 residues: DnaJ homolog subfamily B member 6 (241 aa).

An interaction with HSP70 region spans residues valine 2–glycine 146. Positions aspartate 3–glycine 69 constitute a J domain. The interaction with KRT18 stretch occupies residues phenylalanine 119–lysine 241. Position 135 is an omega-N-methylarginine (arginine 135).

As to quaternary structure, homooligomer. Interacts with BAG3, HSPB8 and STUB1. Interacts with ALKBH1. Interacts with HSP70, KRT18 and PTTG.

The protein resides in the cytoplasm. The protein localises to the perinuclear region. Its subcellular location is the nucleus. It is found in the myofibril. It localises to the sarcomere. The protein resides in the z line. Its function is as follows. Has a stimulatory effect on the ATPase activity of HSP70 in a dose-dependent and time-dependent manner and hence acts as a co-chaperone of HSP70. Plays an indispensable role in the organization of KRT8/KRT18 filaments. Acts as an endogenous molecular chaperone for neuronal proteins including huntingtin. Suppresses aggregation and toxicity of polyglutamine-containing, aggregation-prone proteins. Also reduces cellular toxicity and caspase-3 activity. This chain is DnaJ homolog subfamily B member 6, found in Macaca fascicularis (Crab-eating macaque).